Consider the following 500-residue polypeptide: Oogenesin-3 (500 aa).

Residues 116 to 143 (RCKLRVLKWRDEQHDFCGIWPGSHEAED) form an LRR 1; degenerate repeat. One copy of the LRR 2; degenerate repeat lies at 198-222 (HLLCRKLVIETLTKDTVIEIFKIVN). One copy of the LRR 3; degenerate repeat lies at 223–248 (ADCIQELELYSLCLEDLAFLNPYLRQ). One copy of the LRR 4; degenerate repeat lies at 249–285 (MDNLLELTLDHVTDSLSMGDSEMCEEEMITLVSQLPT). 5 LRR repeats span residues 286 to 311 (FPCLQKLCVNDVYFIYGNLNEILRCL), 312 to 343 (KKPLVSFCISNCELSQSDLDCLPYCLNIFELK), 344 to 367 (CLYLIDIPLNHLCLDPLGFLLESV), 368 to 395 (RHTLECLELKSCDMGEPQFNALLPALSQ), and 396 to 420 (CSHLTDVSFWENELSLLFLKQLLQH).

It belongs to the PRAME family. As to expression, expressed in ovary, specifically in oocytes. Detected in follicles with two layers of granulosa cells, and are present in early as well as large antral follicles.

The sequence is that of Oogenesin-3 from Mus musculus (Mouse).